A 551-amino-acid polypeptide reads, in one-letter code: Medium/long-chain-fatty-acid--CoA/3-oxocholest-4-en-26-oate--CoA ligase (551 aa).

Residues 172-180 (TGGTTGFPK), aspartate 417, arginine 432, and lysine 523 each bind ATP.

It belongs to the ATP-dependent AMP-binding enzyme family.

It catalyses the reaction a medium-chain fatty acid + ATP + CoA = a medium-chain fatty acyl-CoA + AMP + diphosphate. It carries out the reaction a long-chain fatty acid + ATP + CoA = a long-chain fatty acyl-CoA + AMP + diphosphate. The catalysed reaction is (25S)-3-oxocholest-4-en-26-oate + ATP + CoA = (25S)-3-oxocholest-4-en-26-oyl-CoA + AMP + diphosphate. It functions in the pathway lipid metabolism; fatty acid biosynthesis. Its pathway is steroid metabolism; cholesterol metabolism. In terms of biological role, plays an essential role in degradation of the side chains of C-24 branched-chain sterols. Not essential for degradation of straight chain sterols such as cholesterol. Catalyzes the activation of medium/long-chain fatty acids as acyl-coenzyme A (acyl-CoA), which are then transferred to the multifunctional polyketide synthase (PKS) type III for further chain extension. May be involved in the degradation of cholesterol via the degradation of the side chains of C-24 branched-chain sterols. In Mycolicibacterium smegmatis (strain ATCC 700084 / mc(2)155) (Mycobacterium smegmatis), this protein is Medium/long-chain-fatty-acid--CoA/3-oxocholest-4-en-26-oate--CoA ligase.